Consider the following 1553-residue polypeptide: ABC-type transporter cctS (1553 aa).

4 helical membrane passes run Leu-27–Ala-47, Leu-90–Gly-110, Asp-114–Val-134, and Ser-151–Gly-171. Asn-176 carries N-linked (GlcNAc...) asparagine glycosylation. A run of 5 helical transmembrane segments spans residues Phe-177–Thr-197, Leu-286–Leu-306, Thr-324–Cys-344, Gly-413–Leu-433, and Gly-438–Ile-458. The ABC transmembrane type-1 1 domain occupies Ala-293 to Arg-582. An N-linked (GlcNAc...) asparagine glycan is attached at Asn-524. 2 helical membrane passes run Thr-527–Trp-547 and Ser-550–Phe-570. Asn-617 carries N-linked (GlcNAc...) asparagine glycosylation. An ABC transporter 1 domain is found at Asn-635 to Asn-874. Residue Gly-670–Ser-677 participates in ATP binding. N-linked (GlcNAc...) asparagine glycosylation is present at Asn-725. A helical membrane pass occupies residues Trp-948–Trp-970. An ABC transmembrane type-1 2 domain is found at Val-951 to Gln-1255. Asn-992 carries an N-linked (GlcNAc...) asparagine glycan. A helical membrane pass occupies residues Ile-1017 to Phe-1037. A glycan (N-linked (GlcNAc...) asparagine) is linked at Asn-1085. Helical transmembrane passes span Ile-1086–Ser-1108, Ala-1113–Gly-1135, Phe-1204–Val-1224, and Ala-1229–Leu-1249. The ABC transporter 2 domain maps to Val-1294–Cys-1533. Gly-1328–Ser-1335 provides a ligand contact to ATP.

It belongs to the ABC transporter superfamily.

It localises to the membrane. Its pathway is mycotoxin biosynthesis. Its function is as follows. ABC-type transporter; part of the gene cluster that mediates the biosynthesis of the mycotoxin cyclochlorotine, a hepatotoxic and carcinogenic cyclic chlorinated pentapeptide. CctS is essential for the biosynthesis of cyclochlorotine, maybe as a chloride channel that supplies chloride for chlorination by cctP2. This Talaromyces islandicus (Penicillium islandicum) protein is ABC-type transporter cctS.